The sequence spans 339 residues: Dihydroorotate dehydrogenase (quinone) (339 aa).

FMN contacts are provided by residues 62–66 (AGMDK) and Thr-86. Position 66 (Lys-66) interacts with substrate. A substrate-binding site is contributed by 111–115 (NRMGF). The FMN site is built by Asn-139 and Asn-172. Asn-172 lines the substrate pocket. Ser-175 acts as the Nucleophile in catalysis. Asn-177 is a substrate binding site. Residues Lys-217 and Thr-245 each coordinate FMN. 246–247 (NT) provides a ligand contact to substrate. FMN is bound by residues Gly-268, Gly-297, and 318 to 319 (YS).

It belongs to the dihydroorotate dehydrogenase family. Type 2 subfamily. Monomer. It depends on FMN as a cofactor.

The protein resides in the cell membrane. The enzyme catalyses (S)-dihydroorotate + a quinone = orotate + a quinol. It participates in pyrimidine metabolism; UMP biosynthesis via de novo pathway; orotate from (S)-dihydroorotate (quinone route): step 1/1. Catalyzes the conversion of dihydroorotate to orotate with quinone as electron acceptor. The sequence is that of Dihydroorotate dehydrogenase (quinone) from Shewanella baltica (strain OS223).